The primary structure comprises 89 residues: Small ribosomal subunit protein uS15 (89 aa).

It belongs to the universal ribosomal protein uS15 family. As to quaternary structure, part of the 30S ribosomal subunit. Forms a bridge to the 50S subunit in the 70S ribosome, contacting the 23S rRNA.

One of the primary rRNA binding proteins, it binds directly to 16S rRNA where it helps nucleate assembly of the platform of the 30S subunit by binding and bridging several RNA helices of the 16S rRNA. Its function is as follows. Forms an intersubunit bridge (bridge B4) with the 23S rRNA of the 50S subunit in the ribosome. The protein is Small ribosomal subunit protein uS15 of Chlorobium limicola (strain DSM 245 / NBRC 103803 / 6330).